Consider the following 326-residue polypeptide: tRNA-cytidine(32) 2-sulfurtransferase (326 aa).

The PP-loop motif motif lies at 63-68 (SGGKDS). [4Fe-4S] cluster contacts are provided by cysteine 138, cysteine 141, and cysteine 229.

The protein belongs to the TtcA family. In terms of assembly, homodimer. Requires Mg(2+) as cofactor. [4Fe-4S] cluster is required as a cofactor.

The protein resides in the cytoplasm. The enzyme catalyses cytidine(32) in tRNA + S-sulfanyl-L-cysteinyl-[cysteine desulfurase] + AH2 + ATP = 2-thiocytidine(32) in tRNA + L-cysteinyl-[cysteine desulfurase] + A + AMP + diphosphate + H(+). It participates in tRNA modification. Catalyzes the ATP-dependent 2-thiolation of cytidine in position 32 of tRNA, to form 2-thiocytidine (s(2)C32). The sulfur atoms are provided by the cysteine/cysteine desulfurase (IscS) system. This is tRNA-cytidine(32) 2-sulfurtransferase from Leptothrix cholodnii (strain ATCC 51168 / LMG 8142 / SP-6) (Leptothrix discophora (strain SP-6)).